A 506-amino-acid polypeptide reads, in one-letter code: Maturase K (506 aa).

This sequence belongs to the intron maturase 2 family. MatK subfamily.

The protein localises to the plastid. It is found in the chloroplast. Its function is as follows. Usually encoded in the trnK tRNA gene intron. Probably assists in splicing its own and other chloroplast group II introns. This chain is Maturase K, found in Olea europaea (Common olive).